Reading from the N-terminus, the 366-residue chain is Beta sliding clamp (366 aa).

Belongs to the beta sliding clamp family. In terms of assembly, forms a ring-shaped head-to-tail homodimer around DNA which binds and tethers DNA polymerases and other proteins to the DNA. The DNA replisome complex has a single clamp-loading complex (3 tau and 1 each of delta, delta', psi and chi subunits) which binds 3 Pol III cores (1 core on the leading strand and 2 on the lagging strand) each with a beta sliding clamp dimer. Additional proteins in the replisome are other copies of gamma, psi and chi, Ssb, DNA helicase and RNA primase.

It is found in the cytoplasm. In terms of biological role, confers DNA tethering and processivity to DNA polymerases and other proteins. Acts as a clamp, forming a ring around DNA (a reaction catalyzed by the clamp-loading complex) which diffuses in an ATP-independent manner freely and bidirectionally along dsDNA. Initially characterized for its ability to contact the catalytic subunit of DNA polymerase III (Pol III), a complex, multichain enzyme responsible for most of the replicative synthesis in bacteria; Pol III exhibits 3'-5' exonuclease proofreading activity. The beta chain is required for initiation of replication as well as for processivity of DNA replication. The polypeptide is Beta sliding clamp (dnaN) (Chlamydia muridarum (strain MoPn / Nigg)).